A 245-amino-acid polypeptide reads, in one-letter code: Polynucleotide 3'-phosphatase (245 aa).

Belongs to the DNA 3' phosphatase family.

Its subcellular location is the nucleus. It catalyses the reaction a 3'end (2'-deoxyribonucleotide 3'-phosphate)-DNA + H2O = a 3'-end 2'-deoxyribonucleotide-DNA + phosphate. Its function is as follows. Dephosphorylate DNA's 3'-phosphate termini. Has a role in the repair of breaks in single-stranded DNA. The polypeptide is Polynucleotide 3'-phosphatase (TPP1) (Saccharomyces mikatae (Yeast)).